The following is a 163-amino-acid chain: Transcription elongation factor GreA (163 aa).

Residues 11 to 38 (FKQLEKELDRLKKERPGVIQAIKEAREE) are a coiled coil.

This sequence belongs to the GreA/GreB family.

Functionally, necessary for efficient RNA polymerase transcription elongation past template-encoded arresting sites. The arresting sites in DNA have the property of trapping a certain fraction of elongating RNA polymerases that pass through, resulting in locked ternary complexes. Cleavage of the nascent transcript by cleavage factors such as GreA or GreB allows the resumption of elongation from the new 3'terminus. GreA releases sequences of 2 to 3 nucleotides. The protein is Transcription elongation factor GreA of Nitratidesulfovibrio vulgaris (strain ATCC 29579 / DSM 644 / CCUG 34227 / NCIMB 8303 / VKM B-1760 / Hildenborough) (Desulfovibrio vulgaris).